The following is a 1064-amino-acid chain: Carbamoyl phosphate synthase large chain (1064 aa).

The interval 1 to 401 (MPKRADIKKI…ALMKAIRSLE (401 aa)) is carboxyphosphate synthetic domain. ATP contacts are provided by arginine 129, arginine 169, glycine 175, glycine 176, lysine 208, isoleucine 210, glutamate 215, glycine 241, isoleucine 242, histidine 243, glutamine 284, and glutamate 298. An ATP-grasp 1 domain is found at 133-327 (KQLMEALKEP…IAKMAAKIAI (195 aa)). Mg(2+) is bound by residues glutamine 284, glutamate 298, and asparagine 300. Mn(2+)-binding residues include glutamine 284, glutamate 298, and asparagine 300. Residues 402-546 (IGTFALDDLT…YSTYELENES (145 aa)) are oligomerization domain. The segment at 547–929 (LKEKRPSVLV…ALYKAFVAAG (383 aa)) is carbamoyl phosphate synthetic domain. The ATP-grasp 2 domain occupies 671–861 (NQVIKKLDLS…LAQLATRVML (191 aa)). ATP contacts are provided by arginine 707, serine 746, leucine 748, glutamate 752, glycine 777, valine 778, histidine 779, serine 780, glutamine 820, and glutamate 832. Mg(2+) is bound by residues glutamine 820, glutamate 832, and asparagine 834. Residues glutamine 820, glutamate 832, and asparagine 834 each coordinate Mn(2+). The region spanning 930–1064 (FKVHEHGNVL…VSAINKGDKS (135 aa)) is the MGS-like domain. Residues 930–1064 (FKVHEHGNVL…VSAINKGDKS (135 aa)) form an allosteric domain region.

Belongs to the CarB family. In terms of assembly, composed of two chains; the small (or glutamine) chain promotes the hydrolysis of glutamine to ammonia, which is used by the large (or ammonia) chain to synthesize carbamoyl phosphate. Tetramer of heterodimers (alpha,beta)4. Mg(2+) is required as a cofactor. The cofactor is Mn(2+).

The enzyme catalyses hydrogencarbonate + L-glutamine + 2 ATP + H2O = carbamoyl phosphate + L-glutamate + 2 ADP + phosphate + 2 H(+). The catalysed reaction is hydrogencarbonate + NH4(+) + 2 ATP = carbamoyl phosphate + 2 ADP + phosphate + 2 H(+). It participates in amino-acid biosynthesis; L-arginine biosynthesis; carbamoyl phosphate from bicarbonate: step 1/1. The protein operates within pyrimidine metabolism; UMP biosynthesis via de novo pathway; (S)-dihydroorotate from bicarbonate: step 1/3. Its function is as follows. Large subunit of the glutamine-dependent carbamoyl phosphate synthetase (CPSase). CPSase catalyzes the formation of carbamoyl phosphate from the ammonia moiety of glutamine, carbonate, and phosphate donated by ATP, constituting the first step of 2 biosynthetic pathways, one leading to arginine and/or urea and the other to pyrimidine nucleotides. The large subunit (synthetase) binds the substrates ammonia (free or transferred from glutamine from the small subunit), hydrogencarbonate and ATP and carries out an ATP-coupled ligase reaction, activating hydrogencarbonate by forming carboxy phosphate which reacts with ammonia to form carbamoyl phosphate. The sequence is that of Carbamoyl phosphate synthase large chain from Oenococcus oeni (strain ATCC BAA-331 / PSU-1).